Here is a 356-residue protein sequence, read N- to C-terminus: Probable dual-specificity RNA methyltransferase RlmN (356 aa).

The Proton acceptor role is filled by Glu97. The Radical SAM core domain occupies 103-333 (YHHGNSVCIS…VTIRREMGSD (231 aa)). Cys110 and Cys338 are disulfide-bonded. [4Fe-4S] cluster is bound by residues Cys117, Cys121, and Cys124. Residues 164 to 165 (GE), Ser196, 219 to 221 (SLH), and Asn295 contribute to the S-adenosyl-L-methionine site. Cys338 (S-methylcysteine intermediate) is an active-site residue.

The protein belongs to the radical SAM superfamily. RlmN family. [4Fe-4S] cluster serves as cofactor.

It is found in the cytoplasm. The enzyme catalyses adenosine(2503) in 23S rRNA + 2 reduced [2Fe-2S]-[ferredoxin] + 2 S-adenosyl-L-methionine = 2-methyladenosine(2503) in 23S rRNA + 5'-deoxyadenosine + L-methionine + 2 oxidized [2Fe-2S]-[ferredoxin] + S-adenosyl-L-homocysteine. It carries out the reaction adenosine(37) in tRNA + 2 reduced [2Fe-2S]-[ferredoxin] + 2 S-adenosyl-L-methionine = 2-methyladenosine(37) in tRNA + 5'-deoxyadenosine + L-methionine + 2 oxidized [2Fe-2S]-[ferredoxin] + S-adenosyl-L-homocysteine. Specifically methylates position 2 of adenine 2503 in 23S rRNA and position 2 of adenine 37 in tRNAs. The chain is Probable dual-specificity RNA methyltransferase RlmN from Lachnoclostridium phytofermentans (strain ATCC 700394 / DSM 18823 / ISDg) (Clostridium phytofermentans).